Reading from the N-terminus, the 155-residue chain is RNA-binding protein 3 (155 aa).

An RRM domain is found at 6-84 (GKLFVGGLNF…RQIRVDHAGK (79 aa)). An Omega-N-methylarginine modification is found at Arg47. The interval 79–155 (VDHAGKSARG…GGNYRDNYDN (77 aa)) is disordered. Position 105 is an asymmetric dimethylarginine; alternate (Arg105). The residue at position 105 (Arg105) is a Dimethylated arginine; alternate. Arg105 bears the Omega-N-methylarginine; alternate mark. A compositionally biased stretch (gly residues) spans 105–114 (RGGGDQGYGS). Arg120 and Arg130 each carry omega-N-methylarginine. 2 positions are modified to phosphoserine: Ser135 and Ser145. Tyr153 is modified (phosphotyrosine).

In terms of assembly, interacts with RPL4. Associates with the 60S ribosomal subunits. Post-translationally, arg-105 is dimethylated, probably to asymmetric dimethylarginine. In terms of processing, phosphorylated. Isoform 2 is methylated. In terms of tissue distribution, widely expressed in the brain. Highly expressed in the cerebellum and olfactory bulb (at protein level). Expressed in neurons and glial cells.

It localises to the nucleus. The protein localises to the cytoplasm. It is found in the cell projection. Its subcellular location is the dendrite. Cold-inducible mRNA binding protein that enhances global protein synthesis at both physiological and mild hypothermic temperatures. Reduces the relative abundance of microRNAs, when overexpressed. Enhances phosphorylation of translation initiation factors and active polysome formation. This chain is RNA-binding protein 3 (Rbm3), found in Rattus norvegicus (Rat).